A 246-amino-acid chain; its full sequence is Ly6/PLAUR domain-containing protein 4 (246 aa).

The signal sequence occupies residues 1 to 26 (MGPQHLSPMQLLCLLGAISSLPWAEA). An N-linked (GlcNAc...) asparagine glycan is attached at Asn-117. Positions 142–223 (CPTCVGEHSK…INIVEKALFT (82 aa)) constitute a UPAR/Ly6 domain. Ala-225 carries GPI-anchor amidated alanine lipidation. A propeptide spans 226–246 (GTPCRSPSWGILLGLLFAFKG) (removed in mature form).

The protein resides in the cell membrane. This chain is Ly6/PLAUR domain-containing protein 4 (LYPD4), found in Bos taurus (Bovine).